The chain runs to 232 residues: MFNINMEIKEKSITTFIGPSGCGKTTLLKSINRLNDLIDGVKMSGVIKIFDKDIFDKDIDITKLRTEVGMVFQKPNPFPISIYDNVVYGLRSLGIKDKKILDQICEESLVKAALWDEVKDILISPALGLSGGQQQRLCIARAIAMKPKILLMDEPTSALDPIATLKVEELVLDLKKDYTIVMVTHSLQQATRISDYTGYFLKGELVEFNKTKKIFTNPKDRRTENYISGRYE.

The ABC transporter domain occupies 1–227 (MFNINMEIKE…PKDRRTENYI (227 aa)). 18–25 (GPSGCGKT) is an ATP binding site.

This sequence belongs to the ABC transporter superfamily. Phosphate importer (TC 3.A.1.7) family. As to quaternary structure, the complex is composed of two ATP-binding proteins (PstB), two transmembrane proteins (PstC and PstA) and a solute-binding protein (PstS).

Its subcellular location is the cell membrane. The catalysed reaction is phosphate(out) + ATP + H2O = ADP + 2 phosphate(in) + H(+). Its function is as follows. Part of the ABC transporter complex PstSACB involved in phosphate import. Responsible for energy coupling to the transport system. This is Phosphate import ATP-binding protein PstB from Mycoplasma mycoides subsp. mycoides SC (strain CCUG 32753 / NCTC 10114 / PG1).